The following is a 63-amino-acid chain: Large ribosomal subunit protein uL29 (63 aa).

The protein belongs to the universal ribosomal protein uL29 family.

The polypeptide is Large ribosomal subunit protein uL29 (Vibrio parahaemolyticus serotype O3:K6 (strain RIMD 2210633)).